Consider the following 125-residue polypeptide: Ly6/PLAUR domain-containing protein 2 (125 aa).

The signal sequence occupies residues 1-22 (MRGTRLALLALVLAACGELAPA). The UPAR/Ly6 domain maps to 25–100 (CYVCPEPTGV…VSCCNTELCN (76 aa)). The N-linked (GlcNAc...) asparagine glycan is linked to asparagine 46. Glycine 103 carries GPI-anchor amidated glycine lipidation. A propeptide spans 104–125 (APALNSLHCGALTLLPLLSLRL) (removed in mature form).

The protein localises to the cell membrane. This is Ly6/PLAUR domain-containing protein 2 (LYPD2) from Homo sapiens (Human).